The sequence spans 400 residues: S-adenosylmethionine synthase (400 aa).

H17 serves as a coordination point for ATP. Residue D19 participates in Mg(2+) binding. E45 contacts K(+). Positions 58 and 101 each coordinate L-methionine. The segment at Q101–Q111 is flexible loop. Residues D177–K179, R244–F245, D253, R259–K260, A276, and K280 contribute to the ATP site. D253 contributes to the L-methionine binding site. K284 provides a ligand contact to L-methionine.

It belongs to the AdoMet synthase family. As to quaternary structure, homotetramer; dimer of dimers. Requires Mg(2+) as cofactor. K(+) serves as cofactor.

The protein resides in the cytoplasm. It carries out the reaction L-methionine + ATP + H2O = S-adenosyl-L-methionine + phosphate + diphosphate. Its pathway is amino-acid biosynthesis; S-adenosyl-L-methionine biosynthesis; S-adenosyl-L-methionine from L-methionine: step 1/1. Functionally, catalyzes the formation of S-adenosylmethionine (AdoMet) from methionine and ATP. The overall synthetic reaction is composed of two sequential steps, AdoMet formation and the subsequent tripolyphosphate hydrolysis which occurs prior to release of AdoMet from the enzyme. This Bacillus licheniformis (strain ATCC 14580 / DSM 13 / JCM 2505 / CCUG 7422 / NBRC 12200 / NCIMB 9375 / NCTC 10341 / NRRL NRS-1264 / Gibson 46) protein is S-adenosylmethionine synthase.